Here is a 116-residue protein sequence, read N- to C-terminus: Large ribosomal subunit protein bL19 (116 aa).

This sequence belongs to the bacterial ribosomal protein bL19 family.

Its function is as follows. This protein is located at the 30S-50S ribosomal subunit interface and may play a role in the structure and function of the aminoacyl-tRNA binding site. The protein is Large ribosomal subunit protein bL19 of Staphylococcus aureus (strain USA300).